The chain runs to 267 residues: Small ribosomal subunit protein uS2 (267 aa).

The segment at 237–267 is disordered; it reads IGESAAAPSEPALETASAEATAEGEQPGSQA. Positions 238-261 are enriched in low complexity; that stretch reads GESAAAPSEPALETASAEATAEGE.

It belongs to the universal ribosomal protein uS2 family.

This is Small ribosomal subunit protein uS2 from Chelativorans sp. (strain BNC1).